Reading from the N-terminus, the 1198-residue chain is DNA polymerase (1198 aa).

3 disordered regions span residues 1–87, 179–199, and 904–930; these read MALV…PRGT, LEQPDGQGQAAEVEDHQPNPP, and QLALADSDAEESEDERAPTPFYSPPSG. 2 stretches are compositionally biased toward low complexity: residues 30 to 40 and 57 to 68; these read QQPTRAAPAPA and APPTSGGSPASP.

The protein belongs to the DNA polymerase type-B family. In terms of assembly, heterodimer with the terminal protein; this heterodimer binds to bp 9 to 18 of the genome. Forms a complex with viral pTP, DBP and hosts NFIA and POU2F1/OCT1 for initiation of replication.

It localises to the host nucleus. The enzyme catalyses DNA(n) + a 2'-deoxyribonucleoside 5'-triphosphate = DNA(n+1) + diphosphate. In terms of biological role, eukaryotic-type DNA polymerase involved in viral genomic replication. DNA synthesis is protein primed, and acts in a strand displacement replication. Assembles in complex with viral pTP, DBP, host NFIA and host POU2F1/OCT1 on viral origin of replication. The polymerase covalently transfers dCMP onto pTP, thereby initiating complementary strand synthesis. This chain is DNA polymerase, found in Homo sapiens (Human).